The following is a 184-amino-acid chain: Inorganic pyrophosphatase (184 aa).

Residues Lys19, Arg33, and Tyr45 each contribute to the substrate site. Residues Asp55, Asp60, and Asp92 each contribute to the Mg(2+) site. A substrate-binding site is contributed by Tyr129.

This sequence belongs to the PPase family. As to quaternary structure, homohexamer. Mg(2+) serves as cofactor.

The protein localises to the cytoplasm. It catalyses the reaction diphosphate + H2O = 2 phosphate + H(+). Functionally, catalyzes the hydrolysis of inorganic pyrophosphate (PPi) forming two phosphate ions. In Mycoplasma genitalium (strain ATCC 33530 / DSM 19775 / NCTC 10195 / G37) (Mycoplasmoides genitalium), this protein is Inorganic pyrophosphatase.